The primary structure comprises 70 residues: ATP synthase subunit c (70 aa).

The next 2 membrane-spanning stretches (helical) occupy residues 4–24 and 47–67; these read IAAG…DGIV and FIGV…ALMV.

The protein belongs to the ATPase C chain family. F-type ATPases have 2 components, F(1) - the catalytic core - and F(0) - the membrane proton channel. F(1) has five subunits: alpha(3), beta(3), gamma(1), delta(1), epsilon(1). F(0) has three main subunits: a(1), b(2) and c(10-14). The alpha and beta chains form an alternating ring which encloses part of the gamma chain. F(1) is attached to F(0) by a central stalk formed by the gamma and epsilon chains, while a peripheral stalk is formed by the delta and b chains.

It localises to the cell membrane. Functionally, f(1)F(0) ATP synthase produces ATP from ADP in the presence of a proton or sodium gradient. F-type ATPases consist of two structural domains, F(1) containing the extramembraneous catalytic core and F(0) containing the membrane proton channel, linked together by a central stalk and a peripheral stalk. During catalysis, ATP synthesis in the catalytic domain of F(1) is coupled via a rotary mechanism of the central stalk subunits to proton translocation. In terms of biological role, key component of the F(0) channel; it plays a direct role in translocation across the membrane. A homomeric c-ring of between 10-14 subunits forms the central stalk rotor element with the F(1) delta and epsilon subunits. This Levilactobacillus brevis (strain ATCC 367 / BCRC 12310 / CIP 105137 / JCM 1170 / LMG 11437 / NCIMB 947 / NCTC 947) (Lactobacillus brevis) protein is ATP synthase subunit c.